The sequence spans 304 residues: Oxygen-dependent coproporphyrinogen-III oxidase (304 aa).

S94 serves as a coordination point for substrate. Residues H98 and H108 each contribute to the a divalent metal cation site. The active-site Proton donor is the H108. N110–R112 contributes to the substrate binding site. Residues H147 and H177 each contribute to the a divalent metal cation site. Residues Y242–E277 form an important for dimerization region. G260–R262 is a substrate binding site.

This sequence belongs to the aerobic coproporphyrinogen-III oxidase family. As to quaternary structure, homodimer. A divalent metal cation is required as a cofactor.

The protein localises to the cytoplasm. The enzyme catalyses coproporphyrinogen III + O2 + 2 H(+) = protoporphyrinogen IX + 2 CO2 + 2 H2O. Its pathway is porphyrin-containing compound metabolism; protoporphyrin-IX biosynthesis; protoporphyrinogen-IX from coproporphyrinogen-III (O2 route): step 1/1. In terms of biological role, involved in the heme biosynthesis. Catalyzes the aerobic oxidative decarboxylation of propionate groups of rings A and B of coproporphyrinogen-III to yield the vinyl groups in protoporphyrinogen-IX. The protein is Oxygen-dependent coproporphyrinogen-III oxidase of Shewanella piezotolerans (strain WP3 / JCM 13877).